Consider the following 199-residue polypeptide: NAD(P)H dehydrogenase (quinone) (199 aa).

The 187-residue stretch at 4 to 190 folds into the Flavodoxin-like domain; that stretch reads VLVLYYSAYG…AGARYQGKTI (187 aa). Residues 10-15 and 78-80 each bind FMN; these read SAYGHI and TRF. Y12 contacts NAD(+). Substrate is bound at residue W98. FMN is bound by residues 113-119 and H134; that span reads STATQHG.

Belongs to the WrbA family. Requires FMN as cofactor.

The enzyme catalyses a quinone + NADH + H(+) = a quinol + NAD(+). It carries out the reaction a quinone + NADPH + H(+) = a quinol + NADP(+). This Rhodopseudomonas palustris (strain HaA2) protein is NAD(P)H dehydrogenase (quinone).